We begin with the raw amino-acid sequence, 398 residues long: Mu-type opioid receptor (398 aa).

At 1–66 (MDSSTGPGNT…CPQTGSPSMV (66 aa)) the chain is on the extracellular side. Asparagine 9, asparagine 31, asparagine 38, asparagine 46, and asparagine 53 each carry an N-linked (GlcNAc...) asparagine glycan. A helical membrane pass occupies residues 67–91 (TAITIMALYSIVCVVGLFGNFLVMY). Topologically, residues 92 to 104 (VIVRYTKMKTATN) are cytoplasmic. The chain crosses the membrane as a helical span at residues 105–129 (IYIFNLALADALATSTLPFQSVNYL). Over 130–140 (MGTWPFGTILC) the chain is Extracellular. Cysteine 140 and cysteine 217 form a disulfide bridge. A helical transmembrane segment spans residues 141 to 163 (KIVISIDYYNMFTSIFTLCTMSV). Residues 164–183 (DRYIAVCHPVKALDFRTPRN) are Cytoplasmic-facing. Phosphotyrosine is present on tyrosine 166. The chain crosses the membrane as a helical span at residues 184-205 (AKIVNVCNWILSSAIGLPVMFM). Over 206-228 (ATTKYRQGSIDCTLTFSHPTWYW) the chain is Extracellular. Residues 229 to 253 (ENLLKICVFIFAFIMPVLIITVCYG) form a helical membrane-spanning segment. Residues 254-277 (LMILRLKSVRMLSGSKEKDRNLRR) are Cytoplasmic-facing. Residues 278-304 (ITRMVLVVVAVFIVCWTPIHIYVIIKA) form a helical membrane-spanning segment. At 305–312 (LITIPETT) the chain is on the extracellular side. Residues 313-336 (FQTVSWHFCIALGYTNSCLNPVLY) traverse the membrane as a helical segment. Residues 332 to 336 (NPVLY) carry the NPxxY; plays a role in stabilizing the activated conformation of the receptor motif. Residues 337–398 (AFLDENFKRC…NLEAETAPLP (62 aa)) are Cytoplasmic-facing. The S-palmitoyl cysteine moiety is linked to residue cysteine 351. Residues 361-385 (QNSTRVRQNTREHPSTANTVDRTNH) form a disordered region. The residue at position 363 (serine 363) is a Phosphoserine. Position 370 is a phosphothreonine (threonine 370). Serine 375 is subject to Phosphoserine. Threonine 394 carries the phosphothreonine modification.

Belongs to the G-protein coupled receptor 1 family. In terms of assembly, forms homooligomers and heterooligomers with other GPCRs, such as OPRD1, OPRK1, OPRL1, NPFFR2, ADRA2A, SSTR2, CNR1 and CCR5 (probably in dimeric forms). Interacts with heterotrimeric G proteins; interaction with a heterotrimeric complex containing GNAI1, GNB1 and GNG2 stabilizes the active conformation of the receptor and increases its affinity for endomorphin-2, the synthetic opioid peptide DAMGO and for morphinan agonists. Interacts with PPL; the interaction disrupts agonist-mediated G-protein activation. Interacts (via C-terminus) with DNAJB4 (via C-terminus). Interacts with calmodulin; the interaction inhibits the constitutive activity of OPRM1; it abolishes basal and attenuates agonist-stimulated G-protein coupling. Interacts with FLNA, PLD2, RANBP9 and WLS and GPM6A. Interacts with RTP4. Interacts with SYP and GNAS. Interacts with RGS9, RGS17, RGS20, RGS4, PPP1R9B and HINT1. Phosphorylated. Differentially phosphorylated in basal and agonist-induced conditions. Agonist-mediated phosphorylation modulates receptor internalization. Phosphorylated by GRK2 in a agonist-dependent manner. Phosphorylation at Tyr-166 requires receptor activation, is dependent on non-receptor protein tyrosine kinase Src and results in a decrease in agonist efficacy by reducing G-protein coupling efficiency. Phosphorylated on tyrosine residues; the phosphorylation is involved in agonist-induced G-protein-independent receptor down-regulation. Phosphorylation at Ser-375 is involved in G-protein-dependent but not beta-arrestin-dependent activation of the ERK pathway. In terms of processing, ubiquitinated. A basal ubiquitination seems not to be related to degradation. Ubiquitination is increased upon formation of OPRM1:OPRD1 oligomers leading to proteasomal degradation; the ubiquitination is diminished by RTP4. In terms of tissue distribution, brain. Is expressed in the cerebral cortex, caudate putamen, nucleus accumbens, septal nuclei, thalamus, hippocampus, and habenula. Not detected in cerebellum.

Its subcellular location is the cell membrane. It is found in the cell projection. It localises to the axon. The protein resides in the perikaryon. The protein localises to the dendrite. Its subcellular location is the endosome. Receptor for endogenous opioids such as beta-endorphin and endomorphin. Receptor for natural and synthetic opioids including morphine, heroin, DAMGO, fentanyl, etorphine, buprenorphin and methadone. Also activated by enkephalin peptides, such as Met-enkephalin or Met-enkephalin-Arg-Phe, with higher affinity for Met-enkephalin-Arg-Phe. Agonist binding to the receptor induces coupling to an inactive GDP-bound heterotrimeric G-protein complex and subsequent exchange of GDP for GTP in the G-protein alpha subunit leading to dissociation of the G-protein complex with the free GTP-bound G-protein alpha and the G-protein beta-gamma dimer activating downstream cellular effectors. The agonist- and cell type-specific activity is predominantly coupled to pertussis toxin-sensitive G(i) and G(o) G alpha proteins, GNAI1, GNAI2, GNAI3 and GNAO1 isoforms Alpha-1 and Alpha-2, and to a lesser extent to pertussis toxin-insensitive G alpha proteins GNAZ and GNA15. They mediate an array of downstream cellular responses, including inhibition of adenylate cyclase activity and both N-type and L-type calcium channels, activation of inward rectifying potassium channels, mitogen-activated protein kinase (MAPK), phospholipase C (PLC), phosphoinositide/protein kinase (PKC), phosphoinositide 3-kinase (PI3K) and regulation of NF-kappa-B. Also couples to adenylate cyclase stimulatory G alpha proteins. The selective temporal coupling to G-proteins and subsequent signaling can be regulated by RGSZ proteins, such as RGS9, RGS17 and RGS4. Phosphorylation by members of the GPRK subfamily of Ser/Thr protein kinases and association with beta-arrestins is involved in short-term receptor desensitization. Beta-arrestins associate with the GPRK-phosphorylated receptor and uncouple it from the G-protein thus terminating signal transduction. The phosphorylated receptor is internalized through endocytosis via clathrin-coated pits which involves beta-arrestins. The activation of the ERK pathway occurs either in a G-protein-dependent or a beta-arrestin-dependent manner and is regulated by agonist-specific receptor phosphorylation. Acts as a class A G-protein coupled receptor (GPCR) which dissociates from beta-arrestin at or near the plasma membrane and undergoes rapid recycling. Receptor down-regulation pathways are varying with the agonist and occur dependent or independent of G-protein coupling. Endogenous ligands induce rapid desensitization, endocytosis and recycling. Heterooligomerization with other GPCRs can modulate agonist binding, signaling and trafficking properties. This Rattus norvegicus (Rat) protein is Mu-type opioid receptor (Oprm1).